The chain runs to 134 residues: Transmembrane protein 100 (134 aa).

The tract at residues 1–24 is disordered; that stretch reads MTEEPTKENLGGPKSPTPVTMEKS. Ser-15 carries the phosphoserine modification. A run of 2 helical transmembrane segments spans residues 56–76 and 84–104; these read CIIP…AVAY and VISI…ASSA. Ser-121 bears the Phosphoserine mark.

As to quaternary structure, interacts (via C-terminus) with TRPA1 and TRPV1. Interacts with TASOR.

It localises to the cell membrane. Its subcellular location is the membrane. It is found in the perikaryon. The protein localises to the cytoplasm. The protein resides in the perinuclear region. It localises to the endoplasmic reticulum. Its function is as follows. Plays a role during embryonic arterial endothelium differentiation and vascular morphogenesis through the ACVRL1 receptor-dependent signaling pathway upon stimulation by bone morphogenetic proteins, such as GDF2/BMP9 and BMP10. Involved in the regulation of nociception, acting as a modulator of the interaction between TRPA1 and TRPV1, two molecular sensors and mediators of pain signals in dorsal root ganglia (DRG) neurons. Mechanistically, it weakens their interaction, thereby releasing the inhibition of TRPA1 by TRPV1 and increasing the single-channel open probability of the TRPA1-TRPV1 complex. The sequence is that of Transmembrane protein 100 (Tmem100) from Rattus norvegicus (Rat).